The sequence spans 514 residues: Ubiquitin carboxyl-terminal hydrolase 22 (514 aa).

The UBP-type zinc-finger motif lies at 10 to 127 (PGCAHLGSFK…KEEQRKAWKM (118 aa)). The Zn(2+) site is built by Cys-12, His-14, Cys-52, Cys-55, Cys-65, Cys-68, Cys-73, His-78, His-82, His-88, Cys-101, and Cys-104. N6-acetyllysine is present on Lys-118. Residue Thr-136 is modified to Phosphothreonine. In terms of domain architecture, USP spans 165–509 (RGLINLGNTC…EGYLLFYHKQ (345 aa)). Cys-174 (nucleophile) is an active-site residue. Ser-226 carries the phosphoserine modification. The active-site Proton acceptor is His-468.

Belongs to the peptidase C19 family. UBP8 subfamily. As to quaternary structure, component of some SAGA transcription coactivator-HAT complexes, at least composed of ATXN7, ATXN7L3, ENY2, GCN5L2, SUPT3H, TAF10, TRRAP and USP22. Within the SAGA complex, ATXN7L3, ENY2 and USP22 form a subcomplex required for histone deubiquitination. Interacts directly with ATXN7L3; leading to its recruitment to the SAGA complex. Interacts with ATXN7L3 and weakly with ATXN7L3B. Interacts with MED1. In terms of processing, phosphorylated in G2/M phase, but not in G1 phase by CDK1. Ubiquitinated and subsequently degraded in a CDC20-dependent manner.

Its subcellular location is the nucleus. It localises to the cytoplasm. The enzyme catalyses Thiol-dependent hydrolysis of ester, thioester, amide, peptide and isopeptide bonds formed by the C-terminal Gly of ubiquitin (a 76-residue protein attached to proteins as an intracellular targeting signal).. Functionally, deubiquitinase that plays a role in several cellular processes including transcriptional regulation, cell cycle progression or innate immunity. As part of the transcription regulatory histone acetylation (HAT) complex SAGA, catalyzes the deubiquitination of both histones H2A and H2B, thereby acting as a transcriptional coactivator. Recruited to specific gene promoters by activators such as MYC, where it is required for transcription. Facilitates cell-cycle progression by stabilizing CCNB1 and antagonizing its proteasome-mediated degradation in a cell cycle-specific manner. Modulates cell cycle progression and apoptosis also by antagonizing TP53 transcriptional activation through deacetylase SIRT1 stabilization. Plays multiple roles in immunity and inflammation. Participates in antiviral response by deubiquitinating the importin KPNA2, leading to IRF3 nuclear translocation and subsequent type I interferon production. Acts as a central regulator of type III IFN signaling by negatively regulating STING1 activation and ubiquitination. Inhibits NLRP3 inflammasome activation by promoting NLRP3 degradation through ATG5-dependent autophagy. Deubiquitinates CD274 to induce its stabilization and thereby participates in maintenance of immune tolerance to self. Controls necroptotic cell death by regulating RIPK3 phosphorylation and ubiquitination. During bacterial infection, promotes pro-inflammatory response by targeting TRAF6 and removing its 'Lys-48'-linked polyubiquitination. This Bos taurus (Bovine) protein is Ubiquitin carboxyl-terminal hydrolase 22 (USP22).